Consider the following 369-residue polypeptide: uncharacterized protein (369 aa).

A compositionally biased stretch (low complexity) spans 110-121 (ARPTDAFGAPIA). The interval 110 to 172 (ARPTDAFGAP…PPPPASGGGA (63 aa)) is disordered. Over residues 122–136 (PSEPTPASAPSPPKA) the composition is skewed to pro residues.

This is an uncharacterized protein from Lymantria dispar multicapsid nuclear polyhedrosis virus (LdMNPV).